The chain runs to 316 residues: Palmitoyltransferase ZDHHC3-A (316 aa).

At Met-1–Cys-45 the chain is on the cytoplasmic side. Residues Ala-46 to Ile-66 form a helical membrane-spanning segment. At Pro-67 to Asn-70 the chain is on the lumenal side. A helical transmembrane segment spans residues Leu-71–Ser-91. Residues His-92–Tyr-169 are Cytoplasmic-facing. The 52-residue stretch at Val-124–Met-175 folds into the DHHC domain. Cys-144 carries S-palmitoyl cysteine lipidation. The active-site S-palmitoyl cysteine intermediate is the Cys-155. A helical membrane pass occupies residues Phe-170–Phe-190. Over His-191 to Val-212 the chain is Lumenal. The chain crosses the membrane as a helical span at residues Ile-213 to Phe-233. Residues Gly-234–His-316 are Cytoplasmic-facing.

It belongs to the DHHC palmitoyltransferase family. As to quaternary structure, monomer. Homooligomers. The monomeric form has a higher catalytic activity. Forms heterooligomers with zdhhc7. Post-translationally, autopalmitoylated.

The protein localises to the golgi apparatus membrane. The catalysed reaction is L-cysteinyl-[protein] + hexadecanoyl-CoA = S-hexadecanoyl-L-cysteinyl-[protein] + CoA. It catalyses the reaction L-cysteinyl-[protein] + tetradecanoyl-CoA = S-tetradecanoyl-L-cysteinyl-[protein] + CoA. The enzyme catalyses L-cysteinyl-[protein] + octadecanoyl-CoA = S-octadecanoyl-L-cysteinyl-[protein] + CoA. Its function is as follows. Golgi-localized palmitoyltransferase that catalyzes the addition of palmitate onto various protein substrates and regulates their association with membranes. Has no stringent fatty acid selectivity and in addition to palmitate can also transfer onto target proteins myristate from tetradecanoyl-CoA and stearate from octadecanoyl-CoA. The protein is Palmitoyltransferase ZDHHC3-A (zdhhc3a) of Danio rerio (Zebrafish).